Here is a 43-residue protein sequence, read N- to C-terminus: Bacteriocin mundticin (43 aa).

A disulfide bridge connects residues Cys9 and Cys14.

This bacteriocin inhibits the growth of several Gram-positive bacteria, especially pathogenic L.monocytogenes and C.botulinum but has no effect on the growth of a number of yeasts and Gram-negative bacteria. The sequence is that of Bacteriocin mundticin from Enterococcus mundtii.